Consider the following 233-residue polypeptide: H-2 class II histocompatibility antigen, A-F alpha chain (233 aa).

The segment at 1–88 is alpha-1; sequence EDDIEADHVG…KRSNFTPATN (88 aa). At 1–195 the chain is on the extracellular side; the sequence is EDDIEADHVG…IPAPMSELTE (195 aa). Positions 89–182 are alpha-2; sequence EAPQATVFPK…GLEEPVLKHW (94 aa). Residues 91–183 enclose the Ig-like C1-type domain; that stretch reads PQATVFPKSP…LEEPVLKHWE (93 aa). Cys111 and Cys167 form a disulfide bridge. N-linked (GlcNAc...) asparagine glycosylation is present at Asn122. Residues 183 to 195 are connecting peptide; sequence EPEIPAPMSELTE. A helical membrane pass occupies residues 196–221; sequence TVVCALGLSVGLVGIVVGTIFIIQGL. The Cytoplasmic portion of the chain corresponds to 222–233; the sequence is RSGGTSRHPGPL.

Belongs to the MHC class II family.

It localises to the membrane. The protein is H-2 class II histocompatibility antigen, A-F alpha chain (H2-Aa) of Mus musculus (Mouse).